A 558-amino-acid chain; its full sequence is REST corepressor spr-1 (558 aa).

Positions 1-106 (MDLYDDDGES…KVKGPLSNTN (106 aa)) are disordered. A compositionally biased stretch (acidic residues) spans 36-56 (TIEENVPEVEENTLLEEDSLV). Residues 69 to 80 (KPSKSKRKRKRS) are compositionally biased toward basic residues. The region spanning 107–192 (KEINVGTEFQ…SAIAEVARRN (86 aa)) is the ELM2 domain. Residues 193–244 (ELKDVWTDQEITLFENCYQIFGKNFSQIRSALCHRSLQSIVQFYYESKKRVK) enclose the SANT 1 domain. The segment at 271-325 (AIFESMCDNCGEKAENMQINNAMNRPECRACLIYFNQTGVPRPTSLRLVLAERIR) adopts a GATA-type zinc-finger fold. Residues 378–402 (CTENGNVGETSSPSAQKTEIQSESD) show a composition bias toward polar residues. The interval 378 to 406 (CTENGNVGETSSPSAQKTEIQSESDGSGP) is disordered. The SANT 2 domain maps to 481-532 (HYSQDWTQLERSQVIRCFNMYGAHFEHIADVIGTKTPDQVYQFYLENQKAID).

It belongs to the CoREST family. In terms of assembly, probably part of a large repressor complex. Interacts with histone demethylase spr-5/lsd-1.

The protein resides in the nucleus. Probable corepressor protein, which probably participates in the transcriptional repression of the presenilin protein hop-1. Probably acts via the formation of a multiprotein complex that deacetylates and demethylates specific sites on histones. Acts redundantly with the transcriptional repressor lin-35 to play a role in vulval morphogenesis and promote germline proliferation. The protein is REST corepressor spr-1 of Caenorhabditis elegans.